The sequence spans 793 residues: Spindle and centriole-associated protein 1 (793 aa).

Residues 1-29 are disordered; that stretch reads MSYLRASRTSSNLSLAKKPSKTRKKLQAR. Residues 18-27 are compositionally biased toward basic residues; that stretch reads KPSKTRKKLQ. The stretch at 312–405 forms a coiled coil; sequence SLGLLNSMIM…LTAEILSLKE (94 aa). The disordered stretch occupies residues 519 to 542; it reads KTVGNLSSHSAVPKRAANRLPSPP. A coiled-coil region spans residues 622–712; it reads LQNEDLVSQM…LLKLIEQQKQ (91 aa). Positions 718 to 739 are enriched in polar residues; sequence PTLSPITPQGRRTGSSLDTTPL. The segment at 718 to 783 is disordered; sequence PTLSPITPQG…RSQAANDRGE (66 aa). A compositionally biased stretch (low complexity) spans 740–753; sequence SSCSTSGRRSSGAS. A compositionally biased stretch (polar residues) spans 754 to 778; that stretch reads NKSESISTSVGSLRSASTGRRSQAA.

The protein localises to the cytoplasm. The protein resides in the cytoskeleton. It localises to the microtubule organizing center. Its subcellular location is the centrosome. It is found in the centriole. The protein localises to the spindle. Regulator required for centriole duplication. This Xenopus laevis (African clawed frog) protein is Spindle and centriole-associated protein 1 (spice1).